We begin with the raw amino-acid sequence, 437 residues long: 23S rRNA (uracil(1939)-C(5))-methyltransferase RlmD (437 aa).

One can recognise a TRAM domain in the interval 10 to 68 (SAPRNTTFVAEILDLDYQGRGVAKVQGKTWFIENALPQEKVEVRIVDEKRHYGHGISCK). 4 residues coordinate [4Fe-4S] cluster: cysteine 81, cysteine 87, cysteine 90, and cysteine 167. Residues glutamine 270, phenylalanine 299, asparagine 304, glutamate 320, asparagine 347, and aspartate 368 each contribute to the S-adenosyl-L-methionine site. Cysteine 394 functions as the Nucleophile in the catalytic mechanism.

It belongs to the class I-like SAM-binding methyltransferase superfamily. RNA M5U methyltransferase family. RlmD subfamily.

It carries out the reaction uridine(1939) in 23S rRNA + S-adenosyl-L-methionine = 5-methyluridine(1939) in 23S rRNA + S-adenosyl-L-homocysteine + H(+). Its function is as follows. Catalyzes the formation of 5-methyl-uridine at position 1939 (m5U1939) in 23S rRNA. This chain is 23S rRNA (uracil(1939)-C(5))-methyltransferase RlmD, found in Pasteurella multocida (strain Pm70).